We begin with the raw amino-acid sequence, 252 residues long: Putative cytosolic acyl coenzyme A thioester hydrolase-like (252 aa).

HotDog ACOT-type domains follow at residues 1–90 (MIKE…LSLT) and 146–252 (SYSQ…SVFT).

As to quaternary structure, homodimer. In terms of tissue distribution, expressed in all tissues examined. Up-regulated in nasopharyngeal carcinoma (at protein level).

The protein localises to the cytoplasm. It carries out the reaction hexadecanoyl-CoA + H2O = hexadecanoate + CoA + H(+). Acyl-CoA thioesterases are a group of enzymes that catalyze the hydrolysis of acyl-CoAs to the free fatty acid and coenzyme A (CoASH), providing the potential to regulate intracellular levels of acyl-CoAs, free fatty acids and CoASH. The polypeptide is Putative cytosolic acyl coenzyme A thioester hydrolase-like (ACOT7L) (Homo sapiens (Human)).